The chain runs to 348 residues: Dihydroorotase (348 aa).

The Zn(2+) site is built by H14 and H16. Residues 16–18 (HLR) and N42 contribute to the substrate site. Zn(2+) is bound by residues K100, H137, and H175. K100 is modified (N6-carboxylysine). H137 contributes to the substrate binding site. L220 lines the substrate pocket. D248 is a Zn(2+) binding site. D248 is a catalytic residue. 2 residues coordinate substrate: H252 and A264.

It belongs to the metallo-dependent hydrolases superfamily. DHOase family. Class II DHOase subfamily. As to quaternary structure, homodimer. The cofactor is Zn(2+).

It catalyses the reaction (S)-dihydroorotate + H2O = N-carbamoyl-L-aspartate + H(+). It participates in pyrimidine metabolism; UMP biosynthesis via de novo pathway; (S)-dihydroorotate from bicarbonate: step 3/3. Catalyzes the reversible cyclization of carbamoyl aspartate to dihydroorotate. This is Dihydroorotase from Pseudomonas putida (strain GB-1).